The sequence spans 274 residues: NH(3)-dependent NAD(+) synthetase (274 aa).

46–53 (GISGGQDS) lines the ATP pocket. A Mg(2+)-binding site is contributed by Asp-52. Arg-140 is a binding site for deamido-NAD(+). Thr-160 is an ATP binding site. Glu-165 provides a ligand contact to Mg(2+). Residues Lys-173 and Asp-180 each coordinate deamido-NAD(+). Residues Lys-189 and Thr-211 each contribute to the ATP site. 260 to 261 (HK) is a deamido-NAD(+) binding site.

The protein belongs to the NAD synthetase family. Homodimer.

The enzyme catalyses deamido-NAD(+) + NH4(+) + ATP = AMP + diphosphate + NAD(+) + H(+). Its pathway is cofactor biosynthesis; NAD(+) biosynthesis; NAD(+) from deamido-NAD(+) (ammonia route): step 1/1. Functionally, catalyzes the ATP-dependent amidation of deamido-NAD to form NAD. Uses ammonia as a nitrogen source. The chain is NH(3)-dependent NAD(+) synthetase from Listeria welshimeri serovar 6b (strain ATCC 35897 / DSM 20650 / CCUG 15529 / CIP 8149 / NCTC 11857 / SLCC 5334 / V8).